The following is a 398-amino-acid chain: Formate-dependent phosphoribosylglycinamide formyltransferase (398 aa).

N(1)-(5-phospho-beta-D-ribosyl)glycinamide-binding positions include 21-22 (EL) and glutamate 81. Residues arginine 113, lysine 154, 194–197 (EEYV), and glutamate 202 contribute to the ATP site. The 197-residue stretch at 118-314 (RFAAEKVKVP…EFQVHVRSAL (197 aa)) folds into the ATP-grasp domain. The Mg(2+) site is built by glutamate 273 and glutamate 285. Residues aspartate 292, lysine 362, and 369-370 (RR) each bind N(1)-(5-phospho-beta-D-ribosyl)glycinamide.

It belongs to the PurK/PurT family. As to quaternary structure, homodimer.

The enzyme catalyses N(1)-(5-phospho-beta-D-ribosyl)glycinamide + formate + ATP = N(2)-formyl-N(1)-(5-phospho-beta-D-ribosyl)glycinamide + ADP + phosphate + H(+). Its pathway is purine metabolism; IMP biosynthesis via de novo pathway; N(2)-formyl-N(1)-(5-phospho-D-ribosyl)glycinamide from N(1)-(5-phospho-D-ribosyl)glycinamide (formate route): step 1/1. Functionally, involved in the de novo purine biosynthesis. Catalyzes the transfer of formate to 5-phospho-ribosyl-glycinamide (GAR), producing 5-phospho-ribosyl-N-formylglycinamide (FGAR). Formate is provided by PurU via hydrolysis of 10-formyl-tetrahydrofolate. The chain is Formate-dependent phosphoribosylglycinamide formyltransferase from Sulfolobus acidocaldarius (strain ATCC 33909 / DSM 639 / JCM 8929 / NBRC 15157 / NCIMB 11770).